We begin with the raw amino-acid sequence, 324 residues long: Methenyltetrahydromethanopterin cyclohydrolase (324 aa).

This sequence belongs to the MCH family.

The protein localises to the cytoplasm. The catalysed reaction is 5,10-methenyl-5,6,7,8-tetrahydromethanopterin + H2O = N(5)-formyl-5,6,7,8-tetrahydromethanopterin + H(+). Its pathway is one-carbon metabolism; formaldehyde degradation; formate from formaldehyde (H(4)MPT route): step 3/5. In terms of biological role, catalyzes the hydrolysis of methenyl-H(4)MPT(+) to 5-formyl-H(4)MPT. This Methylobacterium sp. (strain 4-46) protein is Methenyltetrahydromethanopterin cyclohydrolase.